Here is a 157-residue protein sequence, read N- to C-terminus: Endoribonuclease YbeY (157 aa).

Residues histidine 116, histidine 120, and histidine 126 each coordinate Zn(2+).

The protein belongs to the endoribonuclease YbeY family. The cofactor is Zn(2+).

Its subcellular location is the cytoplasm. Single strand-specific metallo-endoribonuclease involved in late-stage 70S ribosome quality control and in maturation of the 3' terminus of the 16S rRNA. This chain is Endoribonuclease YbeY, found in Blochmanniella pennsylvanica (strain BPEN).